The sequence spans 332 residues: Protein phosphatase PTC7 homolog fig (332 aa).

The PPM-type phosphatase domain maps to 70–325 (KPCSPRERAN…DDITLILASV (256 aa)). Mn(2+) is bound by residues D102, G103, and D247.

The protein belongs to the PP2C family. Mg(2+) is required as a cofactor. The cofactor is Mn(2+).

The enzyme catalyses O-phospho-L-seryl-[protein] + H2O = L-seryl-[protein] + phosphate. It catalyses the reaction O-phospho-L-threonyl-[protein] + H2O = L-threonyl-[protein] + phosphate. In Drosophila ananassae (Fruit fly), this protein is Protein phosphatase PTC7 homolog fig.